The chain runs to 239 residues: Probable transcriptional regulatory protein VC_A0006 (239 aa).

Belongs to the TACO1 family.

It is found in the cytoplasm. The chain is Probable transcriptional regulatory protein VC_A0006 from Vibrio cholerae serotype O1 (strain ATCC 39315 / El Tor Inaba N16961).